Reading from the N-terminus, the 427-residue chain is Mitochondrial distribution and morphology protein 10 (427 aa).

Positions S393 to S414 are enriched in low complexity. The interval S393–S427 is disordered.

This sequence belongs to the MDM10 family. As to quaternary structure, component of the ER-mitochondria encounter structure (ERMES) or MDM complex, composed of mmm1, mdm10, mdm12 and mdm34. Associates with the mitochondrial outer membrane sorting assembly machinery SAM(core) complex.

It localises to the mitochondrion outer membrane. Component of the ERMES/MDM complex, which serves as a molecular tether to connect the endoplasmic reticulum and mitochondria. Components of this complex are involved in the control of mitochondrial shape and protein biogenesis and may function in phospholipid exchange. mdm10 is involved in the late assembly steps of the general translocase of the mitochondrial outer membrane (TOM complex). Functions in the tom40-specific route of the assembly of outer membrane beta-barrel proteins, including the association of tom40 with the receptor tom22 and small TOM proteins. Can associate with the SAM(core) complex as well as the mdm12-mmm1 complex, both involved in late steps of the major beta-barrel assembly pathway, that is responsible for biogenesis of all outer membrane beta-barrel proteins. May act as a switch that shuttles between both complexes and channels precursor proteins into the tom40-specific pathway. Plays a role in mitochondrial morphology and in the inheritance of mitochondria. In Emericella nidulans (strain FGSC A4 / ATCC 38163 / CBS 112.46 / NRRL 194 / M139) (Aspergillus nidulans), this protein is Mitochondrial distribution and morphology protein 10 (mdmB).